Here is a 350-residue protein sequence, read N- to C-terminus: tRNA uridine(34) hydroxylase (350 aa).

The region spanning 146–240 (DDPDAVFIDM…YARRAREQGL (95 aa)) is the Rhodanese domain. Cys-200 serves as the catalytic Cysteine persulfide intermediate. A compositionally biased stretch (basic and acidic residues) spans 319 to 328 (RRRRAGRENG). Positions 319–350 (RRRRAGRENGNKIFNKSRGRLNSKLSIPDPAE) are disordered.

It belongs to the TrhO family.

The enzyme catalyses uridine(34) in tRNA + AH2 + O2 = 5-hydroxyuridine(34) in tRNA + A + H2O. Functionally, catalyzes oxygen-dependent 5-hydroxyuridine (ho5U) modification at position 34 in tRNAs. In Salmonella choleraesuis (strain SC-B67), this protein is tRNA uridine(34) hydroxylase.